A 244-amino-acid chain; its full sequence is Haloacid dehalogenase-like hydrolase domain-containing protein Sgpp (244 aa).

Asp28 (nucleophile) is an active-site residue. Residues Asp28, Asp30, and Asp189 each contribute to the Mg(2+) site. The active-site Proton donor is Asp30.

This sequence belongs to the HAD-like hydrolase superfamily. DOG/GPP family. It depends on Mg(2+) as a cofactor. As to expression, ubiquitous with highest expression in flowers.

Functionally, acts as a phosphosugar phosphatase on a broad range of sugar phosphate substrates with preferential activity on D-ribose-5-phosphate, 2-deoxy-D-ribose-5-phosphate, 2-deoxy-D-glucose-6-phosphate, and D-mannose-6-phosphate and with a lower activity on D-fructose-1-phosphate, D-glucose-6-phosphate, DL-glycerol-3-phosphate, and D-fructose-6-phosphate. The sequence is that of Haloacid dehalogenase-like hydrolase domain-containing protein Sgpp (SGPP) from Arabidopsis thaliana (Mouse-ear cress).